We begin with the raw amino-acid sequence, 52 residues long: Large ribosomal subunit protein eL40 (52 aa).

It belongs to the eukaryotic ribosomal protein eL40 family.

The chain is Large ribosomal subunit protein eL40 from Thermococcus onnurineus (strain NA1).